Consider the following 446-residue polypeptide: Phosphoglucosamine mutase (446 aa).

Ser-103 functions as the Phosphoserine intermediate in the catalytic mechanism. Residues Ser-103, Asp-242, Asp-244, and Asp-246 each contribute to the Mg(2+) site. Ser-103 is subject to Phosphoserine.

It belongs to the phosphohexose mutase family. Mg(2+) is required as a cofactor. In terms of processing, activated by phosphorylation.

It carries out the reaction alpha-D-glucosamine 1-phosphate = D-glucosamine 6-phosphate. In terms of biological role, catalyzes the conversion of glucosamine-6-phosphate to glucosamine-1-phosphate. This chain is Phosphoglucosamine mutase, found in Vibrio vulnificus (strain CMCP6).